The following is a 154-amino-acid chain: UPF0178 protein YaiI (154 aa).

The protein belongs to the UPF0178 family.

This chain is UPF0178 protein YaiI, found in Escherichia coli (strain ATCC 8739 / DSM 1576 / NBRC 3972 / NCIMB 8545 / WDCM 00012 / Crooks).